Here is a 777-residue protein sequence, read N- to C-terminus: Histone-lysine N-methyltransferase set9 (777 aa).

One can recognise an SET domain in the interval 117-231 (CPFEVNATNR…VGEEITVTYS (115 aa)). Disordered stretches follow at residues 263–414 (AVQK…ILSP) and 682–718 (RMGS…QGQY). Residues 291–301 (TALQASRTPSV) show a composition bias toward polar residues. Residues 323–337 (TSTTDSAAQGAGADG) show a composition bias toward low complexity. Composition is skewed to polar residues over residues 371 to 405 (TAPS…QGSE) and 688 to 698 (KQGSSAPSTKG).

This sequence belongs to the class V-like SAM-binding methyltransferase superfamily. Histone-lysine methyltransferase family. Suvar4-20 subfamily.

It localises to the nucleus. It is found in the chromosome. The catalysed reaction is L-lysyl(20)-[histone H4] + 3 S-adenosyl-L-methionine = N(6),N(6),N(6)-trimethyl-L-lysyl(20)-[histone H4] + 3 S-adenosyl-L-homocysteine + 3 H(+). In terms of biological role, histone methyltransferase that trimethylates 'Lys-20' of histone H4 to form H4K20me3. This Neurospora crassa (strain ATCC 24698 / 74-OR23-1A / CBS 708.71 / DSM 1257 / FGSC 987) protein is Histone-lysine N-methyltransferase set9 (hlm-1).